The primary structure comprises 352 residues: Holliday junction branch migration complex subunit RuvB (352 aa).

The tract at residues 4–185 is large ATPase domain (RuvB-L); that stretch reads PDRLISAVSG…FGIVQRLEFY (182 aa). ATP contacts are provided by residues Ile24, Arg25, Gly66, Lys69, Thr70, Thr71, 132–134, Arg175, Tyr185, and Arg222; that span reads EDF. Thr70 contacts Mg(2+). Residues 186–256 form a small ATPAse domain (RuvB-S) region; that stretch reads NVEDLATIVS…IADKALNLLD (71 aa). Residues 259–352 form a head domain (RuvB-H) region; it reads ERGFDHLDRR…SDLFTSEDGN (94 aa). Residues Arg295, Arg314, and Arg319 each coordinate DNA.

It belongs to the RuvB family. As to quaternary structure, homohexamer. Forms an RuvA(8)-RuvB(12)-Holliday junction (HJ) complex. HJ DNA is sandwiched between 2 RuvA tetramers; dsDNA enters through RuvA and exits via RuvB. An RuvB hexamer assembles on each DNA strand where it exits the tetramer. Each RuvB hexamer is contacted by two RuvA subunits (via domain III) on 2 adjacent RuvB subunits; this complex drives branch migration. In the full resolvosome a probable DNA-RuvA(4)-RuvB(12)-RuvC(2) complex forms which resolves the HJ.

Its subcellular location is the cytoplasm. The catalysed reaction is ATP + H2O = ADP + phosphate + H(+). The RuvA-RuvB-RuvC complex processes Holliday junction (HJ) DNA during genetic recombination and DNA repair, while the RuvA-RuvB complex plays an important role in the rescue of blocked DNA replication forks via replication fork reversal (RFR). RuvA specifically binds to HJ cruciform DNA, conferring on it an open structure. The RuvB hexamer acts as an ATP-dependent pump, pulling dsDNA into and through the RuvAB complex. RuvB forms 2 homohexamers on either side of HJ DNA bound by 1 or 2 RuvA tetramers; 4 subunits per hexamer contact DNA at a time. Coordinated motions by a converter formed by DNA-disengaged RuvB subunits stimulates ATP hydrolysis and nucleotide exchange. Immobilization of the converter enables RuvB to convert the ATP-contained energy into a lever motion, pulling 2 nucleotides of DNA out of the RuvA tetramer per ATP hydrolyzed, thus driving DNA branch migration. The RuvB motors rotate together with the DNA substrate, which together with the progressing nucleotide cycle form the mechanistic basis for DNA recombination by continuous HJ branch migration. Branch migration allows RuvC to scan DNA until it finds its consensus sequence, where it cleaves and resolves cruciform DNA. The protein is Holliday junction branch migration complex subunit RuvB of Pseudomonas paraeruginosa (strain DSM 24068 / PA7) (Pseudomonas aeruginosa (strain PA7)).